Consider the following 245-residue polypeptide: tRNA pseudouridine synthase A (245 aa).

Residue D52 is the Nucleophile of the active site. Substrate is bound at residue Y111.

This sequence belongs to the tRNA pseudouridine synthase TruA family. In terms of assembly, homodimer.

It carries out the reaction uridine(38/39/40) in tRNA = pseudouridine(38/39/40) in tRNA. Functionally, formation of pseudouridine at positions 38, 39 and 40 in the anticodon stem and loop of transfer RNAs. This Afipia carboxidovorans (strain ATCC 49405 / DSM 1227 / KCTC 32145 / OM5) (Oligotropha carboxidovorans) protein is tRNA pseudouridine synthase A.